The following is a 533-amino-acid chain: Frizzled/smoothened-like sans CRD protein H (533 aa).

Residues M1 to A21 form the signal peptide. The Extracellular portion of the chain corresponds to S22–S103. N76 is a glycosylation site (N-linked (GlcNAc...) asparagine). The chain crosses the membrane as a helical span at residues L104–L124. The Cytoplasmic segment spans residues M125–T134. The helical transmembrane segment at I135–L155 threads the bilayer. Residues K156–C177 lie on the Extracellular side of the membrane. The chain crosses the membrane as a helical span at residues L178–L198. Topologically, residues S199–D216 are cytoplasmic. Residues L217–S237 form a helical membrane-spanning segment. At K238 to G259 the chain is on the extracellular side. Residues C260–L280 form a helical membrane-spanning segment. At Y281 to P302 the chain is on the cytoplasmic side. The helical transmembrane segment at L303–L323 threads the bilayer. The Extracellular segment spans residues A324–K360. The helical transmembrane segment at L361 to F381 threads the bilayer. Residues Y382–V533 are Cytoplasmic-facing. The segment at I454–V533 is disordered. Positions N466–N518 are enriched in low complexity. A coiled-coil region spans residues N501–N528. The segment covering T519–V533 has biased composition (polar residues).

This sequence belongs to the G-protein coupled receptor Fz/Smo family.

It localises to the membrane. The polypeptide is Frizzled/smoothened-like sans CRD protein H (fscH) (Dictyostelium discoideum (Social amoeba)).